A 942-amino-acid polypeptide reads, in one-letter code: Probable serine/threonine-protein kinase DDB_G0279719 (942 aa).

The Protein kinase domain maps to 4 to 617 (YEVVKLIGVG…IDLILQNKLF (614 aa)). ATP is bound by residues 10-18 (IGVGGEAKA) and Lys33. Disordered regions lie at residues 109–170 (NNNQ…INNN), 247–303 (SFSN…NGNT), 352–371 (QPPQ…GADV), and 408–445 (NDPS…LNIN). The segment covering 258-272 (NSNDSNLHQSSSNSS) has biased composition (low complexity). The span at 288–303 (SPGTSTPYQKGSNGNT) shows a compositional bias: polar residues. 2 stretches are compositionally biased toward low complexity: residues 353–367 (PPQS…SSPT) and 410–432 (PSSH…PQSP). The active-site Proton acceptor is the Asp487. The interval 642–686 (TNSKSNSSNNLNNSNSNNDIINNNNNNNSSNNINNNNIVNLNNSY) is disordered. The stretch at 675–703 (NNNNIVNLNNSYNNKQDKCEQRNKSLNQN) forms a coiled coil.

The protein belongs to the protein kinase superfamily. Ser/Thr protein kinase family.

The enzyme catalyses L-seryl-[protein] + ATP = O-phospho-L-seryl-[protein] + ADP + H(+). The catalysed reaction is L-threonyl-[protein] + ATP = O-phospho-L-threonyl-[protein] + ADP + H(+). This chain is Probable serine/threonine-protein kinase DDB_G0279719, found in Dictyostelium discoideum (Social amoeba).